Consider the following 100-residue polypeptide: Aspartyl/glutamyl-tRNA(Asn/Gln) amidotransferase subunit C (100 aa).

The protein belongs to the GatC family. Heterotrimer of A, B and C subunits.

It catalyses the reaction L-glutamyl-tRNA(Gln) + L-glutamine + ATP + H2O = L-glutaminyl-tRNA(Gln) + L-glutamate + ADP + phosphate + H(+). It carries out the reaction L-aspartyl-tRNA(Asn) + L-glutamine + ATP + H2O = L-asparaginyl-tRNA(Asn) + L-glutamate + ADP + phosphate + 2 H(+). Allows the formation of correctly charged Asn-tRNA(Asn) or Gln-tRNA(Gln) through the transamidation of misacylated Asp-tRNA(Asn) or Glu-tRNA(Gln) in organisms which lack either or both of asparaginyl-tRNA or glutaminyl-tRNA synthetases. The reaction takes place in the presence of glutamine and ATP through an activated phospho-Asp-tRNA(Asn) or phospho-Glu-tRNA(Gln). This Corynebacterium aurimucosum (strain ATCC 700975 / DSM 44827 / CIP 107346 / CN-1) (Corynebacterium nigricans) protein is Aspartyl/glutamyl-tRNA(Asn/Gln) amidotransferase subunit C.